The following is a 350-amino-acid chain: Small ribosomal subunit biogenesis GTPase RsgA (350 aa).

The segment covering Met1–Asn17 has biased composition (polar residues). Residues Met1 to Asp33 form a disordered region. One can recognise a CP-type G domain in the interval Thr104 to Phe273. Residues Asn160 to Asp163 and Gly214 to Ser222 contribute to the GTP site. 4 residues coordinate Zn(2+): Cys297, Cys302, His304, and Cys310.

The protein belongs to the TRAFAC class YlqF/YawG GTPase family. RsgA subfamily. As to quaternary structure, monomer. Associates with 30S ribosomal subunit, binds 16S rRNA. Requires Zn(2+) as cofactor.

The protein resides in the cytoplasm. Its function is as follows. One of several proteins that assist in the late maturation steps of the functional core of the 30S ribosomal subunit. Helps release RbfA from mature subunits. May play a role in the assembly of ribosomal proteins into the subunit. Circularly permuted GTPase that catalyzes slow GTP hydrolysis, GTPase activity is stimulated by the 30S ribosomal subunit. The protein is Small ribosomal subunit biogenesis GTPase RsgA of Escherichia coli (strain SMS-3-5 / SECEC).